A 103-amino-acid polypeptide reads, in one-letter code: Nucleoid-associated protein Cgl0243/cg0297 (103 aa).

It belongs to the YbaB/EbfC family. In terms of assembly, homodimer.

It is found in the cytoplasm. Its subcellular location is the nucleoid. Its function is as follows. Binds to DNA and alters its conformation. May be involved in regulation of gene expression, nucleoid organization and DNA protection. The chain is Nucleoid-associated protein Cgl0243/cg0297 from Corynebacterium glutamicum (strain ATCC 13032 / DSM 20300 / JCM 1318 / BCRC 11384 / CCUG 27702 / LMG 3730 / NBRC 12168 / NCIMB 10025 / NRRL B-2784 / 534).